The chain runs to 421 residues: Serine hydroxymethyltransferase (421 aa).

Residues Leu-121 and Gly-125 to Leu-127 each bind (6S)-5,6,7,8-tetrahydrofolate. Position 230 is an N6-(pyridoxal phosphate)lysine (Lys-230).

Belongs to the SHMT family. In terms of assembly, homodimer. The cofactor is pyridoxal 5'-phosphate.

Its subcellular location is the cytoplasm. The catalysed reaction is (6R)-5,10-methylene-5,6,7,8-tetrahydrofolate + glycine + H2O = (6S)-5,6,7,8-tetrahydrofolate + L-serine. It participates in one-carbon metabolism; tetrahydrofolate interconversion. Its pathway is amino-acid biosynthesis; glycine biosynthesis; glycine from L-serine: step 1/1. Its function is as follows. Catalyzes the reversible interconversion of serine and glycine with tetrahydrofolate (THF) serving as the one-carbon carrier. This reaction serves as the major source of one-carbon groups required for the biosynthesis of purines, thymidylate, methionine, and other important biomolecules. Also exhibits THF-independent aldolase activity toward beta-hydroxyamino acids, producing glycine and aldehydes, via a retro-aldol mechanism. The chain is Serine hydroxymethyltransferase from Carboxydothermus hydrogenoformans (strain ATCC BAA-161 / DSM 6008 / Z-2901).